A 92-amino-acid polypeptide reads, in one-letter code: C-C motif chemokine 4 (92 aa).

A signal peptide spans 1-23 (MKLCVTVLSLLVLVAAFCSPALS). 2 cysteine pairs are disulfide-bonded: cysteine 34–cysteine 58 and cysteine 35–cysteine 74.

It belongs to the intercrine beta (chemokine CC) family. Homodimer. Interacts with CCR5.

Its subcellular location is the secreted. Its function is as follows. Monokine with inflammatory and chemokinetic properties. The chain is C-C motif chemokine 4 (CCL4) from Sus scrofa (Pig).